We begin with the raw amino-acid sequence, 403 residues long: S-adenosylmethionine synthase (403 aa).

140-145 (GKGSTD) provides a ligand contact to ATP.

It belongs to the AdoMet synthase 2 family. Mg(2+) serves as cofactor.

It catalyses the reaction L-methionine + ATP + H2O = S-adenosyl-L-methionine + phosphate + diphosphate. Its pathway is amino-acid biosynthesis; S-adenosyl-L-methionine biosynthesis; S-adenosyl-L-methionine from L-methionine: step 1/1. Catalyzes the formation of S-adenosylmethionine from methionine and ATP. The polypeptide is S-adenosylmethionine synthase (Sulfolobus acidocaldarius (strain ATCC 33909 / DSM 639 / JCM 8929 / NBRC 15157 / NCIMB 11770)).